Consider the following 242-residue polypeptide: Probable transcriptional regulatory protein Bphyt_1301 (242 aa).

This sequence belongs to the TACO1 family.

Its subcellular location is the cytoplasm. The sequence is that of Probable transcriptional regulatory protein Bphyt_1301 from Paraburkholderia phytofirmans (strain DSM 17436 / LMG 22146 / PsJN) (Burkholderia phytofirmans).